A 357-amino-acid polypeptide reads, in one-letter code: Membrane-bound lytic murein transglycosylase C (357 aa).

Positions 1-16 are cleaved as a signal peptide; the sequence is MKKLLALFVIAPILIS. Residue C17 is the site of N-palmitoyl cysteine attachment. A lipid anchor (S-diacylglycerol cysteine) is attached at C17.

It belongs to the transglycosylase Slt family.

It localises to the cell outer membrane. The catalysed reaction is Exolytic cleavage of the (1-&gt;4)-beta-glycosidic linkage between N-acetylmuramic acid (MurNAc) and N-acetylglucosamine (GlcNAc) residues in peptidoglycan, from either the reducing or the non-reducing ends of the peptidoglycan chains, with concomitant formation of a 1,6-anhydrobond in the MurNAc residue.. Murein-degrading enzyme. May play a role in recycling of muropeptides during cell elongation and/or cell division. The chain is Membrane-bound lytic murein transglycosylase C from Photorhabdus laumondii subsp. laumondii (strain DSM 15139 / CIP 105565 / TT01) (Photorhabdus luminescens subsp. laumondii).